We begin with the raw amino-acid sequence, 239 residues long: MVQHLTAEEIIQYISDAKKSTPIKVYLNGNFEGITYPESFKVFGSEQSKVIFCEADDWKPFYEAYGSQFEDIEIEMDRRNSAIPLKDLTNTNARIEPGAFIREQAIIEDGAVVMMGATINIGAVVGEGTMIDMNATLGGRATTGKNVHVGAGAVLAGVIEPPSASPVIIEDDVLIGANAVILEGVRVGKGAIVAAGAIVTQDVPAGAVVAGTPCKVIKAASEVQDTKKEIVAALRKLND.

Belongs to the transferase hexapeptide repeat family. DapH subfamily.

It catalyses the reaction (S)-2,3,4,5-tetrahydrodipicolinate + acetyl-CoA + H2O = L-2-acetamido-6-oxoheptanedioate + CoA. Its pathway is amino-acid biosynthesis; L-lysine biosynthesis via DAP pathway; LL-2,6-diaminopimelate from (S)-tetrahydrodipicolinate (acetylase route): step 1/3. Functionally, catalyzes the transfer of an acetyl group from acetyl-CoA to tetrahydrodipicolinate. This chain is 2,3,4,5-tetrahydropyridine-2,6-dicarboxylate N-acetyltransferase, found in Staphylococcus aureus (strain Newman).